Consider the following 438-residue polypeptide: Transmembrane protease serine 11F (438 aa).

Residues methionine 1–leucine 32 lie on the Cytoplasmic side of the membrane. Residues phenylalanine 33–valine 53 traverse the membrane as a helical; Signal-anchor for type II membrane protein segment. Residues glutamate 54–methionine 438 are Extracellular-facing. One can recognise an SEA domain in the interval lysine 57–serine 175. Residues isoleucine 206–glycine 437 enclose the Peptidase S1 domain. Cysteine 233 and cysteine 249 are disulfide-bonded. Active-site charge relay system residues include histidine 248 and aspartate 293. 2 disulfides stabilise this stretch: cysteine 358–cysteine 374 and cysteine 385–cysteine 413. The active-site Charge relay system is the serine 389.

Belongs to the peptidase S1 family.

It localises to the membrane. In terms of biological role, probable serine protease. This is Transmembrane protease serine 11F (TMPRSS11F) from Homo sapiens (Human).